The primary structure comprises 1387 residues: Mediator of RNA polymerase II transcription subunit 13 (1387 aa).

3 disordered regions span residues 81–102, 354–400, and 620–676; these read ELNN…PEFS, HSAN…ESYS, and SVNS…DIPM. Composition is skewed to polar residues over residues 354 to 367 and 390 to 400; these read HSAN…STGE and SRQNFPTESYS.

The protein belongs to the Mediator complex subunit 13 family. As to quaternary structure, component of the SRB8-11 complex, which itself associates with the Mediator complex.

The protein resides in the nucleus. Functionally, component of the SRB8-11 complex. The SRB8-11 complex is a regulatory module of the Mediator complex which is itself involved in regulation of basal and activated RNA polymerase II-dependent transcription. The SRB8-11 complex may be involved in the transcriptional repression of a subset of genes regulated by Mediator. It may inhibit the association of the Mediator complex with RNA polymerase II to form the holoenzyme complex. This Kluyveromyces lactis (strain ATCC 8585 / CBS 2359 / DSM 70799 / NBRC 1267 / NRRL Y-1140 / WM37) (Yeast) protein is Mediator of RNA polymerase II transcription subunit 13 (SSN2).